Consider the following 96-residue polypeptide: MSRPAKIGATAALSQLQGWAVVSEKDAIGKTYLFADFNAAFGFMTRVALMADKLDHHPEWFNVYNRVEVVLTTHDADGVSDLDVTMARFMDGIATA.

It belongs to the pterin-4-alpha-carbinolamine dehydratase family.

The enzyme catalyses (4aS,6R)-4a-hydroxy-L-erythro-5,6,7,8-tetrahydrobiopterin = (6R)-L-erythro-6,7-dihydrobiopterin + H2O. The sequence is that of Putative pterin-4-alpha-carbinolamine dehydratase from Caulobacter sp. (strain K31).